Consider the following 142-residue polypeptide: Transcription antitermination protein NusB (142 aa).

Belongs to the NusB family.

Functionally, involved in transcription antitermination. Required for transcription of ribosomal RNA (rRNA) genes. Binds specifically to the boxA antiterminator sequence of the ribosomal RNA (rrn) operons. The protein is Transcription antitermination protein NusB of Latilactobacillus sakei subsp. sakei (strain 23K) (Lactobacillus sakei subsp. sakei).